The chain runs to 119 residues: Large ribosomal subunit protein bL20 (119 aa).

Belongs to the bacterial ribosomal protein bL20 family.

In terms of biological role, binds directly to 23S ribosomal RNA and is necessary for the in vitro assembly process of the 50S ribosomal subunit. It is not involved in the protein synthesizing functions of that subunit. The sequence is that of Large ribosomal subunit protein bL20 from Clostridium botulinum (strain Alaska E43 / Type E3).